Reading from the N-terminus, the 761-residue chain is Prolyl endopeptidase FAP (761 aa).

Over 1-4 the chain is Cytoplasmic; that stretch reads MKTW. The helical; Signal-anchor for type II membrane protein transmembrane segment at 5-25 threads the bilayer; that stretch reads LKTVFGVTTLAALALVVICIV. The Extracellular segment spans residues 26–761; sequence LRPSRVYKPE…FLKQCFSLSD (736 aa). Asn-49, Asn-92, and Asn-99 each carry an N-linked (GlcNAc...) asparagine glycan. Positions 203 and 204 each coordinate substrate. Asn-227 and Asn-314 each carry an N-linked (GlcNAc...) asparagine glycan. Disulfide bonds link Cys-321–Cys-332, Cys-438–Cys-441, and Cys-448–Cys-466. The Charge relay system role is filled by Ser-624. Cysteines 643 and 756 form a disulfide. Asn-679 carries an N-linked (GlcNAc...) asparagine glycan. Active-site charge relay system residues include Asp-702 and His-734.

Belongs to the peptidase S9B family. In terms of assembly, homodimer; homodimerization is required for activity of both plasma membrane and soluble forms. The monomer is inactive. Heterodimer with DPP4. Interacts with PLAUR; the interaction occurs at the cell surface of invadopodia membranes. Interacts with ITGB1. Interacts with ITGA3. Associates with integrin alpha-3/beta-1; the association occurs in a collagen-dependent manner at the cell surface of invadopodia membranes. N-glycosylated. In terms of processing, the N-terminus may be blocked. In terms of tissue distribution, expressed strongly in uterus, pancreas, submaxillary gland and skin, less in lymph node, ovary, skeletal muscle, adrenal and bone marrow. Expressed in reactive stromal fibroblast in epithelial cancers. Expressed in melanocytes but not melanomas (at protein level). Detected in fibroblasts, in placenta, uterus, embryos from day 7-19 and in newborn mice (P1).

The protein resides in the cell surface. The protein localises to the cell membrane. Its subcellular location is the cell projection. It localises to the lamellipodium membrane. It is found in the invadopodium membrane. The protein resides in the ruffle membrane. The protein localises to the membrane. Its subcellular location is the secreted. It carries out the reaction Hydrolysis of Pro-|-Xaa &gt;&gt; Ala-|-Xaa in oligopeptides.. The catalysed reaction is Release of an N-terminal dipeptide, Xaa-Yaa-|-Zaa-, from a polypeptide, preferentially when Yaa is Pro, provided Zaa is neither Pro nor hydroxyproline.. Its activity is regulated as follows. Gelatinase activity is inhibited by serine-protease inhibitors, such as phenylmethylsulfonyl fluoride (PMSF), 4-(2-aminoethyl)-benzenesulfonyl fluoride hydrochloride (AEBSF), 4-amidino phenylsulfonyl fluoride (APSF) and diisopropyl fluorophosphate (DFP), N-ethylmaleimide (NEM) and phenylmethylsulfonyl fluoride (PMSF). Dipeptidyl peptidase activity is inhibited by 2,2'-azino-bis(3-ethylbenzthiazoline-6-sulfonic acid), diisopropylfluorophosphate (DFP). Prolyl endopeptidase activity is inhibited by the boronic acid peptide Ac-Gly-BoroPro, Ac-Gly-Pro-chloromethyl ketone and Thr-Ser-Gly-chloromethyl ketone. Cell surface glycoprotein serine protease that participates in extracellular matrix degradation and involved in many cellular processes including tissue remodeling, fibrosis, wound healing, inflammation and tumor growth. Both plasma membrane and soluble forms exhibit post-proline cleaving endopeptidase activity, with a marked preference for Ala/Ser-Gly-Pro-Ser/Asn/Ala consensus sequences, on substrate such as alpha-2-antiplasmin SERPINF2 and SPRY2. Degrade also gelatin, heat-denatured type I collagen, but not native collagen type I and IV, vibronectin, tenascin, laminin, fibronectin, fibrin or casein. Also has dipeptidyl peptidase activity, exhibiting the ability to hydrolyze the prolyl bond two residues from the N-terminus of synthetic dipeptide substrates provided that the penultimate residue is proline, with a preference for Ala-Pro, Ile-Pro, Gly-Pro, Arg-Pro and Pro-Pro. Natural neuropeptide hormones for dipeptidyl peptidase are the neuropeptide Y (NPY), peptide YY (PYY), substance P (TAC1) and brain natriuretic peptide 32 (NPPB). The plasma membrane form, in association with either DPP4, PLAUR or integrins, is involved in the pericellular proteolysis of the extracellular matrix (ECM), and hence promotes cell adhesion, migration and invasion through the ECM. Plays a role in tissue remodeling during development and wound healing. Participates in the cell invasiveness towards the ECM in malignant melanoma cancers. Enhances tumor growth progression by increasing angiogenesis, collagen fiber degradation and apoptosis and by reducing antitumor response of the immune system. Promotes glioma cell invasion through the brain parenchyma by degrading the proteoglycan brevican. Acts as a tumor suppressor in melanocytic cells through regulation of cell proliferation and survival in a serine protease activity-independent manner. The polypeptide is Prolyl endopeptidase FAP (Mus musculus (Mouse)).